Reading from the N-terminus, the 393-residue chain is Protein TsgA (393 aa).

A run of 12 helical transmembrane segments spans residues 11 to 31 (WISFLSYALTGALVIVTGMVM), 51 to 71 (FLNAGILISIFLNAWLMEIVP), 78 to 98 (FGFLLMVLAVAGLMFSHSLAL), 101 to 121 (TAMFILGVVSGITMSIGTFLI), 140 to 160 (FFSMAGMIFPMIAAFLLAHSI), 162 to 182 (WYWVYACIGLVYVAIFILTFG), 206 to 226 (IGVLFLSVAALCYILGQLGFI), 245 to 265 (TLVSNFWMSYMVGMWAFSFIL), 273 to 293 (ILTVLAGLAAILMYVFNTGTP), 297 to 317 (AWSILALGFFSSAIYTTIITL), 332 to 352 (FVLTCGTIGTMLTFVVTGPIV), and 361 to 381 (LLTANGLYAVVFVMCFLLGFV).

Belongs to the major facilitator superfamily. TsgA family.

It is found in the cell inner membrane. The chain is Protein TsgA from Shigella boydii serotype 18 (strain CDC 3083-94 / BS512).